Here is a 241-residue protein sequence, read N- to C-terminus: MSDKPLYSRVLLKVSGEALMGPAQYGIDLDTVDRVARDIKQAIDAGVQVCLVIGGGNIFRGLSGAAKGMERASADYMGMLATVMNALAMQTALEAIGVPTRVQSAIPMMTVCEPYIRRRAVRHMEKGRVVIFAAGTGNPFFTTDTAAALRAVEMGCDALLKGTQVDGVYSADPHKVANAERYDRLTYMDVLARDLKVMDASAIALARENAIPIIVYSIDEPGGFAEVLTGAGRCTIISDAA.

13 to 16 contributes to the ATP binding site; that stretch reads KVSG. G55 contributes to the UMP binding site. ATP contacts are provided by G56 and R60. UMP contacts are provided by residues D75 and 136-143; that span reads TGNPFFTT. T163, Q164, Y169, and D172 together coordinate ATP.

It belongs to the UMP kinase family. Homohexamer.

The protein localises to the cytoplasm. The enzyme catalyses UMP + ATP = UDP + ADP. It functions in the pathway pyrimidine metabolism; CTP biosynthesis via de novo pathway; UDP from UMP (UMPK route): step 1/1. Its activity is regulated as follows. Inhibited by UTP. Functionally, catalyzes the reversible phosphorylation of UMP to UDP. This Parvibaculum lavamentivorans (strain DS-1 / DSM 13023 / NCIMB 13966) protein is Uridylate kinase.